A 181-amino-acid chain; its full sequence is MAADANNLIWIDLEMTGLEPDVDRVIEIATLVTDQELNIIGQGPVIAIHQSDEVLAAMDDWNQKHHGESGLIERVRASQVNEAEAVAQTIAFLAQYVPKGVSPMCGNSVGQDRRFLNRYMRELEDYFHYRNLDVSTVKELVKRWSPETMAGFKKQNTHQALQDIQESIAELQYYRSKVFKI.

The Exonuclease domain occupies 8–171 (LIWIDLEMTG…QDIQESIAEL (164 aa)). The active site involves Tyr129.

The protein belongs to the oligoribonuclease family.

It localises to the cytoplasm. Functionally, 3'-to-5' exoribonuclease specific for small oligoribonucleotides. In Shewanella oneidensis (strain ATCC 700550 / JCM 31522 / CIP 106686 / LMG 19005 / NCIMB 14063 / MR-1), this protein is Oligoribonuclease.